The chain runs to 267 residues: Phosphate import ATP-binding protein PstB 2 (267 aa).

In terms of domain architecture, ABC transporter spans 21–262 (LATKDLHVYY…AQCQSTNDYV (242 aa)). An ATP-binding site is contributed by 53-60 (GPSGCGKS).

The protein belongs to the ABC transporter superfamily. Phosphate importer (TC 3.A.1.7) family. The complex is composed of two ATP-binding proteins (PstB), two transmembrane proteins (PstC and PstA) and a solute-binding protein (PstS).

It localises to the cell membrane. The enzyme catalyses phosphate(out) + ATP + H2O = ADP + 2 phosphate(in) + H(+). Part of the ABC transporter complex PstSACB involved in phosphate import. Responsible for energy coupling to the transport system. The chain is Phosphate import ATP-binding protein PstB 2 from Streptococcus pyogenes serotype M18 (strain MGAS8232).